We begin with the raw amino-acid sequence, 165 residues long: UPF0303 protein Bcep1808_1522 (165 aa).

The protein belongs to the UPF0303 family.

In Burkholderia vietnamiensis (strain G4 / LMG 22486) (Burkholderia cepacia (strain R1808)), this protein is UPF0303 protein Bcep1808_1522.